The chain runs to 258 residues: Thiazole synthase (258 aa).

K96 acts as the Schiff-base intermediate with DXP in catalysis. 1-deoxy-D-xylulose 5-phosphate contacts are provided by residues G157, 183-184 (AG), and 205-206 (NT).

This sequence belongs to the ThiG family. As to quaternary structure, homotetramer. Forms heterodimers with either ThiH or ThiS.

The protein resides in the cytoplasm. It carries out the reaction [ThiS sulfur-carrier protein]-C-terminal-Gly-aminoethanethioate + 2-iminoacetate + 1-deoxy-D-xylulose 5-phosphate = [ThiS sulfur-carrier protein]-C-terminal Gly-Gly + 2-[(2R,5Z)-2-carboxy-4-methylthiazol-5(2H)-ylidene]ethyl phosphate + 2 H2O + H(+). Its pathway is cofactor biosynthesis; thiamine diphosphate biosynthesis. Catalyzes the rearrangement of 1-deoxy-D-xylulose 5-phosphate (DXP) to produce the thiazole phosphate moiety of thiamine. Sulfur is provided by the thiocarboxylate moiety of the carrier protein ThiS. In vitro, sulfur can be provided by H(2)S. This chain is Thiazole synthase, found in Alkaliphilus metalliredigens (strain QYMF).